The following is a 410-amino-acid chain: Cysteine desulfurase IscS (410 aa).

Pyridoxal 5'-phosphate is bound by residues alanine 80 to threonine 81, asparagine 160, glutamine 188, and serine 208 to histidine 210. Residue lysine 211 is modified to N6-(pyridoxal phosphate)lysine. Threonine 248 provides a ligand contact to pyridoxal 5'-phosphate. Cysteine 334 (cysteine persulfide intermediate) is an active-site residue. Residue cysteine 334 coordinates [2Fe-2S] cluster.

This sequence belongs to the class-V pyridoxal-phosphate-dependent aminotransferase family. NifS/IscS subfamily. In terms of assembly, homodimer. Forms a heterotetramer with IscU, interacts with other sulfur acceptors. Requires pyridoxal 5'-phosphate as cofactor.

Its subcellular location is the cytoplasm. It carries out the reaction (sulfur carrier)-H + L-cysteine = (sulfur carrier)-SH + L-alanine. It functions in the pathway cofactor biosynthesis; iron-sulfur cluster biosynthesis. Functionally, master enzyme that delivers sulfur to a number of partners involved in Fe-S cluster assembly, tRNA modification or cofactor biosynthesis. Catalyzes the removal of elemental sulfur atoms from cysteine to produce alanine. Functions as a sulfur delivery protein for Fe-S cluster synthesis onto IscU, an Fe-S scaffold assembly protein, as well as other S acceptor proteins. The polypeptide is Cysteine desulfurase IscS (Rickettsia bellii (strain OSU 85-389)).